The primary structure comprises 318 residues: Ribokinase (318 aa).

Residues Asn12–Asp14, Gly40–Asn44, and Glu141 contribute to the substrate site. Residues Asn188 and Thr235–Gly240 each bind ATP. K(+) is bound by residues Asp264 and Ser266. Gly269–Asp270 serves as a coordination point for ATP. Asp270 contacts substrate. Asp270 functions as the Proton acceptor in the catalytic mechanism. K(+)-binding residues include Ser301, Arg304, Gly306, and Ser310.

The protein belongs to the carbohydrate kinase PfkB family. Ribokinase subfamily. In terms of assembly, homodimer. The cofactor is Mg(2+).

It localises to the cytoplasm. The protein resides in the nucleus. The enzyme catalyses D-ribose + ATP = D-ribose 5-phosphate + ADP + H(+). Its pathway is carbohydrate metabolism; D-ribose degradation; D-ribose 5-phosphate from beta-D-ribopyranose: step 2/2. Activated by a monovalent cation that binds near, but not in, the active site. The most likely occupant of the site in vivo is potassium. Ion binding induces a conformational change that may alter substrate affinity. Catalyzes the phosphorylation of ribose at O-5 in a reaction requiring ATP and magnesium. The resulting D-ribose-5-phosphate can then be used either for sythesis of nucleotides, histidine, and tryptophan, or as a component of the pentose phosphate pathway. This Dictyostelium discoideum (Social amoeba) protein is Ribokinase (rbsk).